The following is a 172-amino-acid chain: Signal peptidase complex catalytic subunit SEC11 (172 aa).

The Cytoplasmic portion of the chain corresponds to 1–14 (MLSSLGNPRQAATQ). Residues 15 to 35 (LLNFALILSTAFMMWKGLSVA) form a helical; Signal-anchor for type II membrane protein membrane-spanning segment. At 36–172 (TDSPSPIVVV…MGLMVVLQRE (137 aa)) the chain is on the lumenal side. Active-site charge relay system residues include serine 49, histidine 90, and aspartate 115. The segment at 158 to 169 (AMLGIMGLMVVL) is C-terminal short (CTS) helix.

This sequence belongs to the peptidase S26B family. Component of the signal peptidase complex (SPC) composed of a catalytic subunit SEC11 and three accessory subunits SPC1, SPC2 and SPC3. The complex induces a local thinning of the ER membrane which is used to measure the length of the signal peptide (SP) h-region of protein substrates. This ensures the selectivity of the complex towards h-regions shorter than 18-20 amino acids. SPC associates with the translocon complex.

The protein localises to the endoplasmic reticulum membrane. It carries out the reaction Cleavage of hydrophobic, N-terminal signal or leader sequences from secreted and periplasmic proteins.. Its function is as follows. Catalytic component of the signal peptidase complex (SPC) which catalyzes the cleavage of N-terminal signal sequences from nascent proteins as they are translocated into the lumen of the endoplasmic reticulum. Specifically cleaves N-terminal signal peptides that contain a hydrophobic alpha-helix (h-region) shorter than 18-20 amino acids. The polypeptide is Signal peptidase complex catalytic subunit SEC11 (SEC11) (Pyricularia oryzae (strain 70-15 / ATCC MYA-4617 / FGSC 8958) (Rice blast fungus)).